Reading from the N-terminus, the 220-residue chain is MGKYYCDYCDIYLTHDSMNARKAHNSGRNHVANVRDYFAGLGGNQAQSLIDQIIQQHESGGRNQMMMAPSMRLGAGFMNPLATQPGYPGPPPPGAFPTFPPTAGTPPFRPPFPPSSAPGAPPPTMPPFLPPNASAGAAPGIGMGSTPPFPPNTASPNPGMPPFRPPMGMGMPPAPAQAQAQGSPMGMPQQGQQGTFTPTQEVPQGAGAGIHPDRLRMLGQ.

The Matrin-type zinc-finger motif lies at 4 to 36 (YYCDYCDIYLTHDSMNARKAHNSGRNHVANVRD). Composition is skewed to pro residues over residues 88-130 (PGPP…PFLP) and 147-165 (PPFPPNTASPNPGMPPFRP). The tract at residues 88–220 (PGPPPPGAFP…HPDRLRMLGQ (133 aa)) is disordered. A compositionally biased stretch (low complexity) spans 166 to 200 (PMGMGMPPAPAQAQAQGSPMGMPQQGQQGTFTPTQ). Positions 211 to 220 (HPDRLRMLGQ) are enriched in basic and acidic residues.

This sequence belongs to the U1 small nuclear ribonucleoprotein C family. U1 snRNP is composed of the 7 core Sm proteins B/B', D1, D2, D3, E, F and G that assemble in a heptameric protein ring on the Sm site of the small nuclear RNA to form the core snRNP, and at least 3 U1 snRNP-specific proteins U1-70K, U1-A and U1-C. U1-C interacts with U1 snRNA and the 5' splice-site region of the pre-mRNA.

Its subcellular location is the nucleus. Functionally, component of the spliceosomal U1 snRNP, which is essential for recognition of the pre-mRNA 5' splice-site and the subsequent assembly of the spliceosome. U1-C is directly involved in initial 5' splice-site recognition for both constitutive and regulated alternative splicing. The interaction with the 5' splice-site seems to precede base-pairing between the pre-mRNA and the U1 snRNA. Stimulates commitment or early (E) complex formation by stabilizing the base pairing of the 5' end of the U1 snRNA and the 5' splice-site region. The sequence is that of U1 small nuclear ribonucleoprotein C from Cryptococcus neoformans var. neoformans serotype D (strain JEC21 / ATCC MYA-565) (Filobasidiella neoformans).